The sequence spans 35 residues: Photosystem II reaction center protein Psb30 (35 aa).

A helical transmembrane segment spans residues 7–27 (LIANFAALALITLAGPAVIFI).

This sequence belongs to the Psb30/Ycf12 family. As to quaternary structure, PSII is composed of 1 copy each of membrane proteins PsbA, PsbB, PsbC, PsbD, PsbE, PsbF, PsbH, PsbI, PsbJ, PsbK, PsbL, PsbM, PsbT, PsbX, PsbY, PsbZ, Psb30/Ycf12, peripheral proteins of the oxygen-evolving complex and a large number of cofactors. It forms dimeric complexes.

The protein resides in the plastid. The protein localises to the organellar chromatophore thylakoid membrane. In terms of biological role, a core subunit of photosystem II (PSII), probably helps stabilize the reaction center. The chain is Photosystem II reaction center protein Psb30 from Paulinella chromatophora.